The chain runs to 624 residues: RQC trigger complex subunit CUE3 (624 aa).

Residues 316–359 (VNEEQLSALMELFPQFSKYQLSQTLLAYDNNIELVTNKIFEDPT) enclose the CUE domain. Disordered stretches follow at residues 366–390 (REPAEEEVEPVSDGDNASFTEELSI), 435–469 (RDDTYDEADVNRSDPSKRIGLQEDEESYDTKDDSN), and 546–624 (SKTG…NNAI). Position 377 is a phosphoserine (Ser377). Basic and acidic residues-rich tracts occupy residues 443-455 (DVNRSDPSKRIGL) and 568-589 (EQAKQKKSENIKKHEPQSTEQK). Over residues 590–617 (KRQHAKNEKRKGARANHNRKKGHDKKLA) the composition is skewed to basic residues.

In terms of assembly, component of the RQT (ribosome quality control trigger) complex, composed of SLH1, CUE3, and RQT4. Interacts with ubiquitin; the interaction is direct. Interacts with SLH1. Interacts with RQT4. Interacts with HEL2. Associates with translating ribosomes.

Its subcellular location is the cytoplasm. Involved in activation of the ribosome quality control (RQC) pathway, a pathway that degrades nascent peptide chains during problematic translation. Specifically recognizes and binds RPS20/uS10 ubiquitinated by HEL2, promoting recruitment of the RQT (ribosome quality control trigger) complex on stalled ribosomes, followed by disassembly of stalled ribosomes. This chain is RQC trigger complex subunit CUE3 (CUE3), found in Saccharomyces cerevisiae (strain ATCC 204508 / S288c) (Baker's yeast).